The primary structure comprises 496 residues: Maintenance of mitochondrial morphology protein 1 (496 aa).

Residues 1–22 (MSSQLNDPTPIPAQSSLSFTQG) are Lumenal-facing. The helical transmembrane segment at 23-43 (FLLGQLSVVLLIAAFIKFFIF) threads the bilayer. The Cytoplasmic portion of the chain corresponds to 44–496 (GEAPPPPSRG…SLPGGGVTTT (453 aa)). Disordered regions lie at residues 50 to 96 (PSRG…VPSS), 276 to 331 (PLDT…KSNV), 395 to 433 (GRTGVRTGDDSETGSNAPRSSTAADASGPAHHEDSSREP), and 449 to 496 (DLAS…VTTT). Residues 54–64 (LSHRSATHRRS) show a composition bias toward basic residues. Polar residues predominate over residues 65–74 (NSIYSSTQHD). A compositionally biased stretch (basic and acidic residues) spans 75–84 (GNTRTLREKP). Residues 85–96 (SNSNVLRPVPSS) are compositionally biased toward polar residues. Residues 131–388 (QPESLDWFNV…EPRVQVVGLP (258 aa)) form the SMP-LTD domain. Positions 276 to 287 (PLDTPSHSPSPP) are enriched in pro residues. The segment covering 407–418 (TGSNAPRSSTAA) has biased composition (polar residues). 2 stretches are compositionally biased toward basic and acidic residues: residues 424–433 (AHHEDSSREP) and 462–474 (GDLRSRSMTREES).

This sequence belongs to the MMM1 family. As to quaternary structure, homodimer. Component of the ER-mitochondria encounter structure (ERMES) or MDM complex, composed of mmm1, mdm10, mdm12 and mdm34. A mmm1 homodimer associates with one molecule of mdm12 on each side in a pairwise head-to-tail manner, and the SMP-LTD domains of mmm1 and mdm12 generate a continuous hydrophobic tunnel for phospholipid trafficking.

Its subcellular location is the endoplasmic reticulum membrane. Its function is as follows. Component of the ERMES/MDM complex, which serves as a molecular tether to connect the endoplasmic reticulum (ER) and mitochondria. Components of this complex are involved in the control of mitochondrial shape and protein biogenesis, and function in nonvesicular lipid trafficking between the ER and mitochondria. The mdm12-mmm1 subcomplex functions in the major beta-barrel assembly pathway that is responsible for biogenesis of all outer membrane beta-barrel proteins, and acts in a late step after the SAM complex. The mdm10-mdm12-mmm1 subcomplex further acts in the TOM40-specific pathway after the action of the mdm12-mmm1 complex. Essential for establishing and maintaining the structure of mitochondria and maintenance of mtDNA nucleoids. The chain is Maintenance of mitochondrial morphology protein 1 from Neosartorya fischeri (strain ATCC 1020 / DSM 3700 / CBS 544.65 / FGSC A1164 / JCM 1740 / NRRL 181 / WB 181) (Aspergillus fischerianus).